The chain runs to 366 residues: UDP-GlcNAc:ribostamycin N-acetylglucosaminyltransferase (366 aa).

A compositionally biased stretch (low complexity) spans A342 to G352. Residues A342–G366 form a disordered region. A compositionally biased stretch (basic and acidic residues) spans R357–G366.

The protein belongs to the glycosyltransferase group 1 family. Glycosyltransferase 4 subfamily. Requires a divalent metal cation as cofactor.

The enzyme catalyses ribostamycin + UDP-N-acetyl-alpha-D-glucosamine = 2'''-acetyl-6'''-hydroxyneomycin C + UDP + H(+). It functions in the pathway antibiotic biosynthesis; neomycin biosynthesis. Glycosyltransferase involved in the biosynthesis of neomycin by mediating glycosylation of ribostamycin with UDP-GlcNAc as a sugar donor to generate 2'''-acetyl-6'''-hydroxyneomycin C. The polypeptide is UDP-GlcNAc:ribostamycin N-acetylglucosaminyltransferase (neoK) (Streptomyces fradiae (Streptomyces roseoflavus)).